Reading from the N-terminus, the 226-residue chain is Putative uroporphyrinogen-III synthase (226 aa).

Belongs to the uroporphyrinogen-III synthase family.

It catalyses the reaction hydroxymethylbilane = uroporphyrinogen III + H2O. The protein operates within porphyrin-containing compound metabolism; protoporphyrin-IX biosynthesis; coproporphyrinogen-III from 5-aminolevulinate: step 3/4. Functionally, catalyzes cyclization of the linear tetrapyrrole, hydroxymethylbilane, to the macrocyclic uroporphyrinogen III. This chain is Putative uroporphyrinogen-III synthase, found in Archaeoglobus fulgidus (strain ATCC 49558 / DSM 4304 / JCM 9628 / NBRC 100126 / VC-16).